A 391-amino-acid polypeptide reads, in one-letter code: Multidrug resistance protein MdtL (391 aa).

The Cytoplasmic portion of the chain corresponds to 1-3 (MSR). A helical membrane pass occupies residues 4–24 (FLICSFALVLLYPAGIDMYLV). At 25–41 (GLPRIAADLNASEAQLH) the chain is on the periplasmic side. The helical transmembrane segment at 42–62 (IAFSVYLAGMAAAMLFAGKVA) threads the bilayer. Residues 63 to 68 (DRSGRK) lie on the Cytoplasmic side of the membrane. A helical transmembrane segment spans residues 69–89 (PVAIPGAALFIIASVFCSLAE). The Periplasmic portion of the chain corresponds to 90–92 (TSA). A helical membrane pass occupies residues 93 to 113 (LFLAGRFLQGLGAGCCYVVAF). The Cytoplasmic portion of the chain corresponds to 114-130 (AILRDTLDDRRRAKVLS). Residues 131–151 (LLNGITCIIPVLAPVLGHLIM) traverse the membrane as a helical segment. The Periplasmic portion of the chain corresponds to 152–157 (LKFPWQ). Residues 158–178 (SLFWTMATMGIAVLMLSLFIL) traverse the membrane as a helical segment. Over 179-202 (KETRPAAPAASDKPRENSESLLNR) the chain is Cytoplasmic. A helical transmembrane segment spans residues 203-222 (FFLSRVVITTLSVSVILTFV). The Periplasmic portion of the chain corresponds to 223–244 (NTSPVLLMEIMGFERGEYATIM). The helical transmembrane segment at 245–265 (ALTAGVSMTVSFSTPFALGIF) threads the bilayer. Over 266–268 (KPR) the chain is Cytoplasmic. Residues 269–289 (TLMITSQVLFLAAGITLAVSP) form a helical membrane-spanning segment. Over 290–292 (SHA) the chain is Periplasmic. Residues 293 to 313 (VSLFGITLICAGFSVGFGVAM) form a helical membrane-spanning segment. Residues 314 to 330 (SQALGPFSLRAGVASST) are Cytoplasmic-facing. Residues 331–351 (LGIAQVCGSSLWIWLAAVVGI) form a helical membrane-spanning segment. Over 352–355 (GAWN) the chain is Periplasmic. A helical transmembrane segment spans residues 356–376 (MLIGILIACSIVSLLLIMFVA). The Cytoplasmic portion of the chain corresponds to 377-391 (PGRPVAAHEEIHHHA).

It belongs to the major facilitator superfamily. DHA1 family. MdtL (TC 2.A.1.2.22) subfamily.

Its subcellular location is the cell inner membrane. Its function is as follows. Confers resistance to chloramphenicol. This chain is Multidrug resistance protein MdtL, found in Escherichia coli O6:K15:H31 (strain 536 / UPEC).